The sequence spans 118 residues: NADH-ubiquinone oxidoreductase chain 3 (118 aa).

A run of 3 helical transmembrane segments spans residues Ile-9–Ala-29, Leu-62–Val-82, and Ile-87–Leu-107.

It belongs to the complex I subunit 3 family.

The protein resides in the mitochondrion membrane. The enzyme catalyses a ubiquinone + NADH + 5 H(+)(in) = a ubiquinol + NAD(+) + 4 H(+)(out). Functionally, core subunit of the mitochondrial membrane respiratory chain NADH dehydrogenase (Complex I) that is believed to belong to the minimal assembly required for catalysis. Complex I functions in the transfer of electrons from NADH to the respiratory chain. The immediate electron acceptor for the enzyme is believed to be ubiquinone. This Pinus sylvestris (Scotch pine) protein is NADH-ubiquinone oxidoreductase chain 3 (NAD3).